A 275-amino-acid chain; its full sequence is ATP synthase subunit delta (275 aa).

This sequence belongs to the ATPase delta chain family. As to quaternary structure, F-type ATPases have 2 components, F(1) - the catalytic core - and F(0) - the membrane proton channel. F(1) has five subunits: alpha(3), beta(3), gamma(1), delta(1), epsilon(1). F(0) has three main subunits: a(1), b(2) and c(10-14). The alpha and beta chains form an alternating ring which encloses part of the gamma chain. F(1) is attached to F(0) by a central stalk formed by the gamma and epsilon chains, while a peripheral stalk is formed by the delta and b chains.

The protein resides in the cell membrane. Its function is as follows. F(1)F(0) ATP synthase produces ATP from ADP in the presence of a proton or sodium gradient. F-type ATPases consist of two structural domains, F(1) containing the extramembraneous catalytic core and F(0) containing the membrane proton channel, linked together by a central stalk and a peripheral stalk. During catalysis, ATP synthesis in the catalytic domain of F(1) is coupled via a rotary mechanism of the central stalk subunits to proton translocation. In terms of biological role, this protein is part of the stalk that links CF(0) to CF(1). It either transmits conformational changes from CF(0) to CF(1) or is implicated in proton conduction. This chain is ATP synthase subunit delta, found in Arthrobacter sp. (strain FB24).